The primary structure comprises 335 residues: 3-ketodihydrosphingosine reductase TSC10 (335 aa).

NADPH contacts are provided by Gly42, Ser44, Ser45, and Gly46. The GXSXG motif lies at 42–46; sequence GGSSG. Leu47 is an NADP(+) binding site. Residues Arg67, Asp68, Lys71, Asp95, and Leu96 each contribute to the NADPH site. Residue Asp95 participates in NADP(+) binding. NADP(+)-binding residues include Tyr190, Lys194, and Ile223. Tyr190 serves as the catalytic Proton acceptor. Lys194 serves as the catalytic Lowers pKa of active site Tyr. Residues 288–308 form a helical membrane-spanning segment; it reads TNNFLLDTLWLIVSSVGVPIW.

This sequence belongs to the short-chain dehydrogenases/reductases (SDR) family.

The protein resides in the endoplasmic reticulum membrane. It catalyses the reaction sphinganine + NADP(+) = 3-oxosphinganine + NADPH + H(+). It participates in lipid metabolism; sphingolipid metabolism. Catalyzes the reduction of 3'-oxosphinganine (3-ketodihydrosphingosine/KDS) to sphinganine (dihydrosphingosine/DHS), the second step of de novo sphingolipid biosynthesis. The protein is 3-ketodihydrosphingosine reductase TSC10 (TSC10) of Cryptococcus neoformans var. neoformans serotype D (strain B-3501A) (Filobasidiella neoformans).